Reading from the N-terminus, the 278-residue chain is Small ribosomal subunit protein uS3 (278 aa).

The 69-residue stretch at 38-106 folds into the KH type-2 domain; the sequence is IRKLLATGLE…QVQLNILEVK (69 aa). The disordered stretch occupies residues 215-278; it reads AAAAPAGADR…AAGQPETTES (64 aa). Over residues 238-278 the composition is skewed to low complexity; it reads SGASGTTATSTDAGRAATEEAPATDAAATAPAAGQPETTES.

It belongs to the universal ribosomal protein uS3 family. As to quaternary structure, part of the 30S ribosomal subunit. Forms a tight complex with proteins S10 and S14.

Functionally, binds the lower part of the 30S subunit head. Binds mRNA in the 70S ribosome, positioning it for translation. This chain is Small ribosomal subunit protein uS3, found in Mycolicibacterium gilvum (strain PYR-GCK) (Mycobacterium gilvum (strain PYR-GCK)).